The primary structure comprises 419 residues: Phosphoglycerate kinase (419 aa).

Substrate contacts are provided by residues D21 to N23, R36, H60 to D63, R137, and R174. ATP contacts are provided by residues K225, G316, E347, and G376 to S379.

It belongs to the phosphoglycerate kinase family. In terms of assembly, monomer.

It is found in the cytoplasm. The enzyme catalyses (2R)-3-phosphoglycerate + ATP = (2R)-3-phospho-glyceroyl phosphate + ADP. It participates in carbohydrate degradation; glycolysis; pyruvate from D-glyceraldehyde 3-phosphate: step 2/5. This Treponema pallidum (strain Nichols) protein is Phosphoglycerate kinase (pgk).